The primary structure comprises 228 residues: Endolytic peptidoglycan transglycosylase RlpA (228 aa).

Positions 1 to 23 are cleaved as a signal peptide; that stretch reads MIQRHKLIVLIFLLIFCLSGCNT.

It belongs to the RlpA family.

Its function is as follows. Lytic transglycosylase with a strong preference for naked glycan strands that lack stem peptides. The protein is Endolytic peptidoglycan transglycosylase RlpA of Rickettsia felis (strain ATCC VR-1525 / URRWXCal2) (Rickettsia azadi).